We begin with the raw amino-acid sequence, 407 residues long: Tryptophan synthase beta chain (407 aa).

An N6-(pyridoxal phosphate)lysine modification is found at Lys91.

This sequence belongs to the TrpB family. In terms of assembly, tetramer of two alpha and two beta chains. Pyridoxal 5'-phosphate serves as cofactor.

It carries out the reaction (1S,2R)-1-C-(indol-3-yl)glycerol 3-phosphate + L-serine = D-glyceraldehyde 3-phosphate + L-tryptophan + H2O. Its pathway is amino-acid biosynthesis; L-tryptophan biosynthesis; L-tryptophan from chorismate: step 5/5. The beta subunit is responsible for the synthesis of L-tryptophan from indole and L-serine. This chain is Tryptophan synthase beta chain, found in Streptococcus pneumoniae (strain 70585).